The primary structure comprises 249 residues: DNA repair protein RecO (249 aa).

It belongs to the RecO family.

Involved in DNA repair and RecF pathway recombination. This chain is DNA repair protein RecO, found in Rhodopseudomonas palustris (strain HaA2).